The primary structure comprises 122 residues: Large ribosomal subunit protein uL18 (122 aa).

Positions 1–24 (MLKKADKNANRLQRHKRVRRKISG) are disordered. A compositionally biased stretch (basic residues) spans 12–22 (LQRHKRVRRKI).

The protein belongs to the universal ribosomal protein uL18 family. In terms of assembly, part of the 50S ribosomal subunit; part of the 5S rRNA/L5/L18/L25 subcomplex. Contacts the 5S and 23S rRNAs.

This is one of the proteins that bind and probably mediate the attachment of the 5S RNA into the large ribosomal subunit, where it forms part of the central protuberance. The protein is Large ribosomal subunit protein uL18 of Clostridioides difficile (strain 630) (Peptoclostridium difficile).